The primary structure comprises 385 residues: GTPase Obg (385 aa).

Residues 1–159 enclose the Obg domain; the sequence is MKFVDEVEIR…RNLKLELLLL (159 aa). The 174-residue stretch at 160–333 folds into the OBG-type G domain; it reads ADVGLLGLPN…LIHDVMTLLE (174 aa). Residues 166–173, 191–195, 213–216, 283–286, and 314–316 each bind GTP; these read GLPNAGKS, FTTLI, DIPG, NKID, and SAI. Mg(2+) is bound by residues S173 and T193.

This sequence belongs to the TRAFAC class OBG-HflX-like GTPase superfamily. OBG GTPase family. In terms of assembly, monomer. Mg(2+) is required as a cofactor.

It is found in the cytoplasm. An essential GTPase which binds GTP, GDP and possibly (p)ppGpp with moderate affinity, with high nucleotide exchange rates and a fairly low GTP hydrolysis rate. Plays a role in control of the cell cycle, stress response, ribosome biogenesis and in those bacteria that undergo differentiation, in morphogenesis control. The sequence is that of GTPase Obg from Pseudoalteromonas translucida (strain TAC 125).